Consider the following 445-residue polypeptide: Histidinol dehydrogenase (445 aa).

NAD(+)-binding residues include Tyr144, Gln205, and Asn228. Substrate contacts are provided by Ser251, Gln273, and His276. Positions 273 and 276 each coordinate Zn(2+). Residues Glu341 and His342 each act as proton acceptor in the active site. 4 residues coordinate substrate: His342, Asp375, Glu429, and His434. Asp375 is a binding site for Zn(2+). His434 serves as a coordination point for Zn(2+).

This sequence belongs to the histidinol dehydrogenase family. It depends on Zn(2+) as a cofactor.

The enzyme catalyses L-histidinol + 2 NAD(+) + H2O = L-histidine + 2 NADH + 3 H(+). The protein operates within amino-acid biosynthesis; L-histidine biosynthesis; L-histidine from 5-phospho-alpha-D-ribose 1-diphosphate: step 9/9. Catalyzes the sequential NAD-dependent oxidations of L-histidinol to L-histidinaldehyde and then to L-histidine. The protein is Histidinol dehydrogenase of Cupriavidus pinatubonensis (strain JMP 134 / LMG 1197) (Cupriavidus necator (strain JMP 134)).